The following is a 452-amino-acid chain: Protein CLT3, chloroplastic (452 aa).

The transit peptide at 1–34 directs the protein to the chloroplast; it reads MATTSRRFTTGLFASITSVKSHSANRPQSISLIR. 10 helical membrane passes run 105 to 125, 137 to 157, 175 to 195, 202 to 222, 230 to 250, 258 to 278, 307 to 327, 353 to 373, 389 to 409, and 412 to 432; these read AEIV…RVMY, FFLA…ILYF, PFLI…AAAA, TTVL…IFLG, ILGC…GSGA, GVLW…GTVL, FQAI…GIPF, GAPF…IALL, TVSV…LGVA, and LPKG…LYSW.

This sequence belongs to the CRT-like transporter family.

The protein localises to the plastid. It is found in the chloroplast membrane. Involved in thiol transport from the plastid to the cytosol. Transports probably both glutathione (GSH) and its precursor, gamma-glutamylcysteine (gamma-EC). Exhibits some functional redundancy with CLT1 in maintaining the root GSH pool. The polypeptide is Protein CLT3, chloroplastic (Arabidopsis thaliana (Mouse-ear cress)).